Consider the following 430-residue polypeptide: Enolase (430 aa).

The tract at residues 1–140 (MPYIVDVYAR…YQYLGGFNSK (140 aa)) is sufficient for secretion. Thr-141 carries the phosphothreonine modification. Gln-163 contacts (2R)-2-phosphoglycerate. Glu-205 serves as the catalytic Proton donor. Asp-242 contacts Mg(2+). A Phosphoserine modification is found at Ser-259. Tyr-281 is subject to Phosphotyrosine. 2 residues coordinate Mg(2+): Glu-287 and Asp-314. A Phosphoserine modification is found at Ser-325. 4 residues coordinate (2R)-2-phosphoglycerate: Lys-339, Arg-368, Ser-369, and Lys-390. Lys-339 serves as the catalytic Proton acceptor.

Belongs to the enolase family. Homooctamer. Component of the RNA degradosome complex composed of rny, rnjA, rnjB, pnp, pfkA and eno (although rnjA and rnjB's presence is controversial). Mg(2+) serves as cofactor. In terms of processing, phosphorylated during sporulation.

The protein resides in the cytoplasm. It localises to the secreted. It is found in the cell surface. The enzyme catalyses (2R)-2-phosphoglycerate = phosphoenolpyruvate + H2O. It functions in the pathway carbohydrate degradation; glycolysis; pyruvate from D-glyceraldehyde 3-phosphate: step 4/5. Its activity is regulated as follows. Covalent binding to the substrate (probably 2-PG) at Lys-339 of a small fraction of enolase causes inactivation of the enzyme, and possibly serves as a signal for the export of the protein. Citrate acts as a non-competitive inhibitor for both forward and reverse reactions, probably by chelating Mg(2+). In terms of biological role, catalyzes the reversible conversion of 2-phosphoglycerate (2-PG) into phosphoenolpyruvate (PEP). It is essential for the degradation of carbohydrates via glycolysis. Functionally, a component of the RNA degradosome, a multi-enzyme complex involved in RNA processing and messenger RNA degradation. The protein is Enolase of Bacillus subtilis (strain 168).